We begin with the raw amino-acid sequence, 164 residues long: Transcription antitermination protein NusB (164 aa).

It belongs to the NusB family.

Involved in transcription antitermination. Required for transcription of ribosomal RNA (rRNA) genes. Binds specifically to the boxA antiterminator sequence of the ribosomal RNA (rrn) operons. The sequence is that of Transcription antitermination protein NusB from Mycolicibacterium gilvum (strain PYR-GCK) (Mycobacterium gilvum (strain PYR-GCK)).